Here is an 87-residue protein sequence, read N- to C-terminus: Putative regulatory protein ABC2323 (87 aa).

It belongs to the RemA family.

The polypeptide is Putative regulatory protein ABC2323 (Shouchella clausii (strain KSM-K16) (Alkalihalobacillus clausii)).